We begin with the raw amino-acid sequence, 44 residues long: Poly-ADP-ribosylation-amplifying and CtIP-maintaining micropeptide (44 aa).

The disordered stretch occupies residues 1-44 (MAASGGTKKAQSGGRRLREPSSRPSRRARQRPRRGALRKAGRFL). Residues 24-44 (PSRRARQRPRRGALRKAGRFL) are compositionally biased toward basic residues.

Interacts with KLHL15; preventing ubiquitination and degradation of RBBP8/CtIP. Interacts with PARP1.

It is found in the nucleus. Its subcellular location is the nucleolus. It localises to the chromosome. In terms of biological role, micropeptide that acts as a regulator of DNA repair both by preventing KLHL15-mediated ubiquitination and degradation of RBBP8/CtIP, and by promoting the poly-ADP-ribosyltransferase activity of PARP1. Prevents KLHL15-mediated ubiquitination of RBBP8/CtIP by competitively blocking the association between KLHL15 and RBBP8/CtIP. Recruited to DNA damage sites via association with poly-ADP-ribose chains, and enhances the poly-ADP-ribosyltransferase activity of PARP1. The chain is Poly-ADP-ribosylation-amplifying and CtIP-maintaining micropeptide from Homo sapiens (Human).